The chain runs to 411 residues: ATP-dependent Clp protease ATP-binding subunit ClpX (411 aa).

The ClpX-type ZB domain occupies 1–51; it reads MAKKKDEEYCSFCGMPRTQVNLMLEGVHAHICDECALRAGEVVREALQKFK. Zn(2+) contacts are provided by C10, C13, C32, and C35. 119–126 contacts ATP; the sequence is PTGTGKTL.

It belongs to the ClpX chaperone family. In terms of assembly, component of the ClpX-ClpP complex. Forms a hexameric ring that, in the presence of ATP, binds to fourteen ClpP subunits assembled into a disk-like structure with a central cavity, resembling the structure of eukaryotic proteasomes.

In terms of biological role, ATP-dependent specificity component of the Clp protease. It directs the protease to specific substrates. Can perform chaperone functions in the absence of ClpP. The sequence is that of ATP-dependent Clp protease ATP-binding subunit ClpX from Porphyromonas gingivalis (strain ATCC 33277 / DSM 20709 / CIP 103683 / JCM 12257 / NCTC 11834 / 2561).